The chain runs to 679 residues: DNA ligase (679 aa).

Residues 41 to 45 (DSVYD), 90 to 91 (SL), and Glu-120 contribute to the NAD(+) site. Lys-122 (N6-AMP-lysine intermediate) is an active-site residue. Residues Arg-143, Glu-177, Lys-293, and Lys-317 each contribute to the NAD(+) site. Residues Cys-411, Cys-414, Cys-429, and Cys-434 each contribute to the Zn(2+) site. Residues 597–679 (DSNSWFAGKR…SETMREDAQA (83 aa)) enclose the BRCT domain.

The protein belongs to the NAD-dependent DNA ligase family. LigA subfamily. The cofactor is Mg(2+). Requires Mn(2+) as cofactor.

It carries out the reaction NAD(+) + (deoxyribonucleotide)n-3'-hydroxyl + 5'-phospho-(deoxyribonucleotide)m = (deoxyribonucleotide)n+m + AMP + beta-nicotinamide D-nucleotide.. In terms of biological role, DNA ligase that catalyzes the formation of phosphodiester linkages between 5'-phosphoryl and 3'-hydroxyl groups in double-stranded DNA using NAD as a coenzyme and as the energy source for the reaction. It is essential for DNA replication and repair of damaged DNA. This chain is DNA ligase, found in Lactiplantibacillus plantarum (strain ATCC BAA-793 / NCIMB 8826 / WCFS1) (Lactobacillus plantarum).